The following is a 391-amino-acid chain: Multidrug resistance protein MdtL (391 aa).

12 helical membrane passes run 4 to 24 (FLIC…MYLV), 42 to 62 (IAFS…GKVA), 69 to 89 (PVAI…SLAE), 93 to 113 (LFLA…VVAF), 134 to 154 (GITC…MLNF), 158 to 178 (SLFW…LFIL), 203 to 222 (FFLS…LTFV), 245 to 265 (ALTA…LGIF), 269 to 289 (TLMI…AVSP), 293 to 313 (VSLF…GVAM), 331 to 351 (LGIA…VVGI), and 356 to 376 (MLIG…MFVA).

This sequence belongs to the major facilitator superfamily. DHA1 family. MdtL (TC 2.A.1.2.22) subfamily.

Its subcellular location is the cell inner membrane. Confers resistance to chloramphenicol. This is Multidrug resistance protein MdtL from Escherichia coli O81 (strain ED1a).